The chain runs to 201 residues: Ribonuclease HII (201 aa).

The 190-residue stretch at 12-201 folds into the RNase H type-2 domain; sequence DLVAGVDEVG…VRELLDVSVQ (190 aa). Residues Asp18, Glu19, and Asp110 each coordinate a divalent metal cation.

It belongs to the RNase HII family. Requires Mn(2+) as cofactor. Mg(2+) serves as cofactor.

The protein localises to the cytoplasm. It carries out the reaction Endonucleolytic cleavage to 5'-phosphomonoester.. Endonuclease that specifically degrades the RNA of RNA-DNA hybrids. This chain is Ribonuclease HII, found in Pseudomonas aeruginosa (strain ATCC 15692 / DSM 22644 / CIP 104116 / JCM 14847 / LMG 12228 / 1C / PRS 101 / PAO1).